We begin with the raw amino-acid sequence, 331 residues long: Cysteine and histidine-rich domain-containing protein 1 (331 aa).

At Ala-2 the chain carries N-acetylalanine. The tract at residues 2–77 is interaction with PPP5C; the sequence is ALLCYNRGCG…KPPEPVKPEV (76 aa). Cys-5, Cys-10, Cys-24, His-27, Cys-42, and Cys-43 together coordinate Zn(2+). CHORD domains follow at residues 5–64 and 157–216; these read CYNR…KGRH and CKNG…RGKH. Residue Thr-47 is modified to Phosphothreonine. Ser-51 is modified (phosphoserine). The Zn(2+) site is built by Cys-59, His-64, Cys-157, Cys-162, Cys-176, His-179, Cys-194, Cys-195, Cys-211, and His-216. A disordered region spans residues 62–82; sequence GRHNSEKPPEPVKPEVKTTEK. Over residues 64 to 82 the composition is skewed to basic and acidic residues; sequence HNSEKPPEPVKPEVKTTEK. The tract at residues 65-316 is interaction with HSP90AA1 and HSP90AB1; the sequence is NSEKPPEPVK…AEPMQWASLE (252 aa). The 90-residue stretch at 227–316 folds into the CS domain; it reads VVPCRHDWHQ…AEPMQWASLE (90 aa).

Interacts with HSP90AA1, HSP90AB1, PPP5C, ROCK1 and ROCK2.

In terms of biological role, regulates centrosome duplication, probably by inhibiting the kinase activity of ROCK2. Proposed to act as co-chaperone for HSP90. May play a role in the regulation of NOD1 via a HSP90 chaperone complex. In vitro, has intrinsic chaperone activity. This function may be achieved by inhibiting association of ROCK2 with NPM1. Plays a role in ensuring the localization of the tyrosine kinase receptor EGFR to the plasma membrane, and thus ensures the subsequent regulation of EGFR activity and EGF-induced actin cytoskeleton remodeling. Involved in stress response. Prevents tumorigenesis. This chain is Cysteine and histidine-rich domain-containing protein 1 (Chordc1), found in Rattus norvegicus (Rat).